The primary structure comprises 880 residues: Valine--tRNA ligase (880 aa).

The 'HIGH' region motif lies at 47–57 (PNITGKLHLGH). Positions 526–530 (KMSKS) match the 'KMSKS' region motif. K529 provides a ligand contact to ATP. Residues 810-845 (LLDLVDREKELERLNKEKTKLEGEILRVEKKLSNER) are a coiled coil.

The protein belongs to the class-I aminoacyl-tRNA synthetase family. ValS type 1 subfamily. Monomer.

It localises to the cytoplasm. The catalysed reaction is tRNA(Val) + L-valine + ATP = L-valyl-tRNA(Val) + AMP + diphosphate. Its function is as follows. Catalyzes the attachment of valine to tRNA(Val). As ValRS can inadvertently accommodate and process structurally similar amino acids such as threonine, to avoid such errors, it has a 'posttransfer' editing activity that hydrolyzes mischarged Thr-tRNA(Val) in a tRNA-dependent manner. This chain is Valine--tRNA ligase, found in Clostridium perfringens (strain 13 / Type A).